Reading from the N-terminus, the 238-residue chain is Keratin-associated protein 5-3 (238 aa).

Tandem repeats lie at residues 35 to 38 (CCVP), 41 to 44 (CCKP), 47 to 50 (CCVP), 91 to 94 (CCVP), 150 to 153 (CCKP), 160 to 163 (CCKP), 170 to 173 (CCKP), 189 to 192 (CCKP), 199 to 202 (CCKP), 218 to 221 (CCKP), and 228 to 231 (CCVP). The tract at residues 35–231 (CCVPVCCCKP…CSSQSSCCVP (197 aa)) is 11 X 4 AA repeats of C-C-X-P.

Belongs to the KRTAP type 5 family. As to quaternary structure, interacts with hair keratins. In terms of tissue distribution, restricted to hair root, not detected in any other tissues.

Its function is as follows. In the hair cortex, hair keratin intermediate filaments are embedded in an interfilamentous matrix, consisting of hair keratin-associated protein (KRTAP), which are essential for the formation of a rigid and resistant hair shaft through their extensive disulfide bond cross-linking with abundant cysteine residues of hair keratins. The matrix proteins include the high-sulfur and high-glycine-tyrosine keratins. This is Keratin-associated protein 5-3 (KRTAP5-3) from Homo sapiens (Human).